The primary structure comprises 295 residues: MSWIDKIFSKSPISSSRKANVPEGVWTKCTSCEQVLYRDELKRHLEVCPKCGHHMRIDARERLLALLDKDGVTELAADLEPKDILKFRDLKKYKDRLTAAQKDTGEKDALVVLSGTLYGLPIVAAASNFGFMGGSMGSVVGAKFVAAAEEAMEKNCPFVCFSASGGARMQEALFSLMQMAKTSAVLAKMKEKGVPFISVLTDPTLGGVSASFAMLGDINIAEPKALIGFAGPRVIEQTVREKLPEGFQRAEFLLEHGAIDMIVKRSDMRDTLASLLTKLMNKPSPFNAEELSDTE.

A CoA carboxyltransferase N-terminal domain is found at 25 to 294 (VWTKCTSCEQ…PFNAEELSDT (270 aa)). C29, C32, C48, and C51 together coordinate Zn(2+). Residues 29–51 (CTSCEQVLYRDELKRHLEVCPKC) form a C4-type zinc finger.

Belongs to the AccD/PCCB family. As to quaternary structure, acetyl-CoA carboxylase is a heterohexamer composed of biotin carboxyl carrier protein (AccB), biotin carboxylase (AccC) and two subunits each of ACCase subunit alpha (AccA) and ACCase subunit beta (AccD). It depends on Zn(2+) as a cofactor.

It localises to the cytoplasm. The catalysed reaction is N(6)-carboxybiotinyl-L-lysyl-[protein] + acetyl-CoA = N(6)-biotinyl-L-lysyl-[protein] + malonyl-CoA. The protein operates within lipid metabolism; malonyl-CoA biosynthesis; malonyl-CoA from acetyl-CoA: step 1/1. Component of the acetyl coenzyme A carboxylase (ACC) complex. Biotin carboxylase (BC) catalyzes the carboxylation of biotin on its carrier protein (BCCP) and then the CO(2) group is transferred by the transcarboxylase to acetyl-CoA to form malonyl-CoA. In Mannheimia succiniciproducens (strain KCTC 0769BP / MBEL55E), this protein is Acetyl-coenzyme A carboxylase carboxyl transferase subunit beta.